A 314-amino-acid polypeptide reads, in one-letter code: Fructose-1,6-bisphosphatase class 1 (314 aa).

Mg(2+) contacts are provided by Glu91, Asp112, Leu114, and Asp115. Residues 115 to 118 (DGSS), Tyr223, and Lys254 each bind substrate. A Mg(2+)-binding site is contributed by Glu260.

The protein belongs to the FBPase class 1 family. Homotetramer. It depends on Mg(2+) as a cofactor.

The protein resides in the cytoplasm. The catalysed reaction is beta-D-fructose 1,6-bisphosphate + H2O = beta-D-fructose 6-phosphate + phosphate. The protein operates within carbohydrate biosynthesis; gluconeogenesis. This chain is Fructose-1,6-bisphosphatase class 1, found in Geobacter metallireducens (strain ATCC 53774 / DSM 7210 / GS-15).